Reading from the N-terminus, the 309-residue chain is MIKNKILTATLAVGLIAPLANPFIEISKAENKIEDIGQGAEIIKRTQDITSKRLAITQNIQFDFVKDKKYNKDALVVKMQGFISSRTTYSDLKKYPYIKRMIWPFQYNISLKTKDSNVDLINYLPKNKIDSADVSQKLGYNIGGNFQSAPSIGGSGSFNYSKTISYNQKNYVTEVESQNSKGVKWGVKANSFVTPNGQVSAYDQYLFAQDPTGPAARDYFVPDNQLPPLIQSGFNPSFITTLSHERGKGDKSEFEITYGRNMDATYAYVTRHRLAVDRKHDAFKNRNVTVKYEVNWKTHEVKIKSITPK.

The first 29 residues, 1 to 29 (MIKNKILTATLAVGLIAPLANPFIEISKA), serve as a signal peptide directing secretion.

It belongs to the aerolysin family. Toxicity requires sequential binding and synergistic association of a class S and a class F component which form heterooligomeric complexes. HlgA (class S) associates with HlgB (class F) thus forming an AB toxin in strains producing both gamma-hemolysins and leukocidins. HlgA and LukF-PV can also form a complex.

Its subcellular location is the secreted. Its function is as follows. Toxin that seems to act by forming pores in the membrane of the cell. Has a hemolytic and a leucotoxic activity. This Staphylococcus aureus (strain COL) protein is Gamma-hemolysin component A (hlgA).